The primary structure comprises 523 residues: Cytidine and dCMP deaminase domain-containing protein 1 (523 aa).

A compositionally biased stretch (polar residues) spans 1-11; that stretch reads MKETDQMQSLE. Disordered stretches follow at residues 1–27 and 55–81; these read MKET…GSMT and QGQK…RVST. Positions 71–169 constitute a CMP/dCMP-type deaminase 1 domain; sequence GDNEELTRVS…SLLTEASSSE (99 aa). His-110, Cys-135, and Cys-138 together coordinate Zn(2+). Residues 272 to 284 carry the Nuclear export signal motif; sequence NLRQNMKDLILLL. Positions 318 to 483 constitute a CMP/dCMP-type deaminase 2 domain; that stretch reads EVARHCMVQA…LNPSEAYSLD (166 aa). Position 399 (His-399) interacts with Zn(2+). Glu-401 (proton donor) is an active-site residue. Zn(2+) is bound by residues Cys-427 and Cys-430. A disordered region spans residues 478–523; that stretch reads EAYSLDPNEPERRENGVLRRRSAKDEQRSSKRPRLETRSAGRATLQ. Over residues 486-516 the composition is skewed to basic and acidic residues; sequence EPERRENGVLRRRSAKDEQRSSKRPRLETRS. Positions 489-511 match the Bipartite nuclear localization signal motif; the sequence is RRENGVLRRRSAKDEQRSSKRPR.

The protein belongs to the cytidine and deoxycytidylate deaminase family. Zn(2+) is required as a cofactor.

It localises to the cytoplasm. The protein resides in the nucleus. It carries out the reaction 2'-deoxycytidine + H2O + H(+) = 2'-deoxyuridine + NH4(+). It catalyses the reaction cytidine + H2O + H(+) = uridine + NH4(+). Catalyzes the deamination of cytidine and deoxycytidine into uridine and deoxyuridine, respectively. May play an important role in testicular development and spermatogenesis. This chain is Cytidine and dCMP deaminase domain-containing protein 1 (Cdadc1), found in Mus musculus (Mouse).